We begin with the raw amino-acid sequence, 225 residues long: Large ribosomal subunit protein bL25 (225 aa).

The segment at 197–225 (PQREEQMEDTDTAAADEEGDKEEDADKQE) is disordered. A compositionally biased stretch (acidic residues) spans 202–225 (QMEDTDTAAADEEGDKEEDADKQE).

It belongs to the bacterial ribosomal protein bL25 family. CTC subfamily. In terms of assembly, part of the 50S ribosomal subunit; part of the 5S rRNA/L5/L18/L25 subcomplex. Contacts the 5S rRNA. Binds to the 5S rRNA independently of L5 and L18.

Functionally, this is one of the proteins that binds to the 5S RNA in the ribosome where it forms part of the central protuberance. This is Large ribosomal subunit protein bL25 from Dichelobacter nodosus (strain VCS1703A).